The primary structure comprises 402 residues: MATQASVEWIFNIAGSAASASIAKAIKDAGGSEDFAKYVIARFYDNYKDSVDDTGVYNACIGRARTVDKALDDSRKAERNEDWHTNLETISRLDLELAELKLILSNLGIKREDRVLNSMFSVVREEGKSSNTVMLKQNAVRMIEEGKLKIRVERNENYTASLKNKIEELECMIDAFEKGKEIIISLDAMNGEVKRDGNSCSYNSTAAFVSTIVGNPIKMYDESGKPLFDVGDYLNPKHIIDKMIENEIPIFKSDYRNNESPDFDVWNERSNLKIVSINDCHAICVFKFENAWWCFDDGVLNKYSGNGNPLIVANAKFQIDKILISGDVELNPGPDPLIRLNDCKTKYGIDIICRFYIVLDNDGSIIHMCYMRTGSAEAVAKGRSKKEAKRIAAKDILDQIGL.

In terms of domain architecture, DRBM spans 334 to 402 (PDPLIRLNDC…AKDILDQIGL (69 aa)).

The protein belongs to the rotavirus NSP3 family.

The protein resides in the host cytoplasm. May play a role in stimulating the translation of viral mRNAs. The polypeptide is Non-structural protein 3 (Sus scrofa (Pig)).